The primary structure comprises 192 residues: Large ribosomal subunit protein uL18 (192 aa).

It belongs to the universal ribosomal protein uL18 family. Part of the 50S ribosomal subunit. Contacts the 5S and 23S rRNAs.

Its function is as follows. This is one of the proteins that bind and probably mediate the attachment of the 5S RNA into the large ribosomal subunit, where it forms part of the central protuberance. The protein is Large ribosomal subunit protein uL18 of Methanothermobacter thermautotrophicus (strain ATCC 29096 / DSM 1053 / JCM 10044 / NBRC 100330 / Delta H) (Methanobacterium thermoautotrophicum).